The primary structure comprises 464 residues: Argininosuccinate lyase (464 aa).

Belongs to the lyase 1 family. Argininosuccinate lyase subfamily.

It is found in the cytoplasm. It carries out the reaction 2-(N(omega)-L-arginino)succinate = fumarate + L-arginine. It participates in amino-acid biosynthesis; L-arginine biosynthesis; L-arginine from L-ornithine and carbamoyl phosphate: step 3/3. Strongly inhibited by L-arginine. Inhibitory effects are lowered at pH 7.0 compared to those at pH 8.0. At 37 degrees Celsius and pH 7.5, activity decreases to 73% and 31% in the presence of 1 mM and 10 mM arginine, respectively. Activity also decreases to 84%, 93%, 82% and 85% in the presence of 10 mM sodium citrate, citrulline, asparatate and glutamate, respectively. Activity decreases to 96% in presence of 1 mM L-lysine. In terms of biological role, catalyzes the last step of arginine biosynthesis, the conversion of argininosuccinate into L-arginine and fumarate. The chain is Argininosuccinate lyase from Arthrospira platensis (strain NIES-39 / UTEX 3086 / IAM M-135) (Spirulina platensis).